We begin with the raw amino-acid sequence, 1169 residues long: DNA repair protein RAD5 (1169 aa).

At Ser2 the chain carries N-acetylserine. Ser20, Ser23, Ser129, and Ser130 each carry phosphoserine. Positions 302–317 (MKRRRTEGGNKREKDN) are enriched in basic and acidic residues. A disordered region spans residues 302 to 327 (MKRRRTEGGNKREKDNGNFGRTLTET). The Helicase ATP-binding domain maps to 519–730 (PILKTMIKGG…YSLVKFLELD (212 aa)). Residue 532-539 (DEMGLGKT) participates in ATP binding. The DEGH box signature appears at 681–684 (DEGH). The RING-type zinc-finger motif lies at 914-961 (CSICTTEPMDLDKALFTECGHSFCEKCLFEYIEFQNSKNLGLKCPNCR). Positions 995 to 1165 (KITALLKELQ…RRKRRIEEIQ (171 aa)) constitute a Helicase C-terminal domain.

This sequence belongs to the SNF2/RAD54 helicase family. In terms of assembly, homodimer. Interacts with POL30, RAD18, UBC9 and UBC13. It depends on Mg(2+) as a cofactor. Requires Mn(2+) as cofactor. The cofactor is Ca(2+).

Its subcellular location is the cytoplasm. The protein resides in the nucleus. Probable helicase, member of the UBC2/RAD6 epistasis group. Functions with the DNA repair protein RAD18 in error-free postreplication DNA repair. Involved in the maintenance of wild-type rates of instability of simple repetitive sequences such as poly(GT) repeats. Seems to be involved in maintaining a balance which acts in favor of error-prone non-homologous joining during DNA double-strand breaks repairs. Recruits the UBC13-MMS2 dimer to chromatin for DNA repair. The sequence is that of DNA repair protein RAD5 (RAD5) from Saccharomyces cerevisiae (strain ATCC 204508 / S288c) (Baker's yeast).